Here is a 111-residue protein sequence, read N- to C-terminus: MNSVPVMLFSISILLAAMLTEGRGLTQTQKESIFSAEHKSDLKSYLEMLVCRRLRDVPESVIHISKVSKEILPDDLLSTYLLELLVCFDKDKLVQSKGIVFNTIKRLLTNT.

The N-terminal stretch at 1-24 (MNSVPVMLFSISILLAAMLTEGRG) is a signal peptide.

This sequence belongs to the exocrine gland-secreted peptide family. Expressed in acinar cells of the lacrimal gland from where it is secreted into tears. Not detected in a range of other tissues tested including other exocrine glands, internal organs and sensory epithelia.

It is found in the secreted. Pheromone produced by juveniles which activates a small number of vomeronasal organ sensory neurons and exhibits a powerful inhibitory effect on adult male mating behavior. This is Exocrine gland-secreted peptide 22 from Mus musculus (Mouse).